The chain runs to 192 residues: NF-kappa-B inhibitor-interacting Ras-like protein 1 (192 aa).

The tract at residues 1–192 is small GTPase-like; that stretch reads MGKGCKVVVC…KSKGTPSNDI (192 aa). A GTP-binding site is contributed by 11-18; the sequence is GMASVGKT. The Effector region signature appears at 35-43; sequence TSDTQEDIY. Residues 61–65 and 120–123 contribute to the GTP site; these read DTRGL and NKCE. The segment at 169–192 is disordered; sequence TQPQSKSAFPLPGRKSKGTPSNDI.

It belongs to the small GTPase superfamily. Ras family. KappaB-Ras subfamily.

It is found in the cytoplasm. In terms of biological role, atypical Ras-like protein that acts as a potent regulator of NF-kappa-B activity by preventing the degradation of NF-kappa-B inhibitor beta (NFKBIB) by most signals, explaining why NFKBIB is more resistant to degradation. The protein is NF-kappa-B inhibitor-interacting Ras-like protein 1 (nkiras1) of Danio rerio (Zebrafish).